The sequence spans 115 residues: Large ribosomal subunit protein bL19 (115 aa).

Belongs to the bacterial ribosomal protein bL19 family.

Its function is as follows. This protein is located at the 30S-50S ribosomal subunit interface and may play a role in the structure and function of the aminoacyl-tRNA binding site. The sequence is that of Large ribosomal subunit protein bL19 from Akkermansia muciniphila (strain ATCC BAA-835 / DSM 22959 / JCM 33894 / BCRC 81048 / CCUG 64013 / CIP 107961 / Muc).